Consider the following 60-residue polypeptide: L-amino-acid oxidase (60 aa).

1–4 (GPMR) contributes to the FAD binding site. Arg-4 serves as a coordination point for substrate.

This sequence belongs to the flavin monoamine oxidase family. FIG1 subfamily. In terms of assembly, homodimer; non-covalently linked. FAD serves as cofactor. Contains 2 disulfide bonds. Post-translationally, N-glycosylated. Expressed by the venom gland.

The protein resides in the secreted. The catalysed reaction is an L-alpha-amino acid + O2 + H2O = a 2-oxocarboxylate + H2O2 + NH4(+). Its function is as follows. Catalyzes an oxidative deamination of predominantly hydrophobic and aromatic L-amino acids, thus producing hydrogen peroxide that may contribute to the diverse toxic effects of this enzyme. Exhibits diverse biological activities, such as hemorrhage, hemolysis, edema, apoptosis of vascular endothelial cells or tumor cell lines, antibacterial and antiparasitic activities, as well as regulation of platelet aggregation. Effects of snake L-amino oxidases on platelets are controversial, since they either induce aggregation or inhibit agonist-induced aggregation. These different effects are probably due to different experimental conditions. The protein is L-amino-acid oxidase of Bitis gabonica (Gaboon adder).